Here is a 131-residue protein sequence, read N- to C-terminus: uncharacterized protein (131 aa).

Residues 99–131 are disordered; sequence NAIQEEEIDMEQQEEKEEKPREKGKKKSVEEEF. The span at 102–113 shows a compositional bias: acidic residues; that stretch reads QEEEIDMEQQEE. A compositionally biased stretch (basic and acidic residues) spans 114–131; that stretch reads KEEKPREKGKKKSVEEEF.

This is an uncharacterized protein from Sulfolobus islandicus rod-shaped virus 1 (SIRV-1).